The following is a 234-amino-acid chain: MNIDAIAVDIDGTITDNKRRLCYSAMEAIRKAEDAGVPTIIVTGNIVTYAYATLVLLGASGGVVGENGGVIFKENYNNNQIKTVVDRTYVNAADKHLKERLGSKFDKNISNDNMYRLTESVFYKTITKKELEEGLKGFEYLDKIELYDSGFALHVTDKRVNKGSSLKYLCNENGIDMENVMAMGDSENDEAFLKEAGMKVAVGNAEDFLKKNSDYVCKNNYGDGVKEAIEKFVL.

The active-site Nucleophile is D9. Positions 9 and 11 each coordinate Mg(2+). K162 is a substrate binding site. D185 and D189 together coordinate Mg(2+).

This sequence belongs to the archaeal SPP-like hydrolase family. Requires Mg(2+) as cofactor.

The enzyme catalyses 2-phosphoglycolate + H2O = glycolate + phosphate. Its function is as follows. Catalyzes the dephosphorylation of 2-phosphoglycolate. This Methanobrevibacter smithii (strain ATCC 35061 / DSM 861 / OCM 144 / PS) protein is Phosphoglycolate phosphatase.